The sequence spans 799 residues: Cadherin-8 (799 aa).

The signal sequence occupies residues 1–29; sequence MPERLAETLLDLWTPLIILWITLPSFVYM. Residues 30 to 61 constitute a propeptide that is removed on maturation; sequence APMNQAHVLTTGSPLELSRQSEEMRILNRSKR. 5 consecutive Cadherin domains span residues 62–167, 168–276, 277–391, 392–494, and 495–616; these read GWVW…APEF, LNGP…PPKF, AQSL…PPVF, SSPT…DNAP, and EFAS…YVLP. Topologically, residues 62–621 are extracellular; that stretch reads GWVWNQMFVL…PYVLPIGLSM (560 aa). N188 carries N-linked (GlcNAc...) asparagine glycosylation. 3 N-linked (GlcNAc...) asparagine glycosylation sites follow: N463, N473, and N544. A helical transmembrane segment spans residues 622–642; sequence GALIAILACIILLLVIVVLFV. Residues 643–799 are Cytoplasmic-facing; that stretch reads TLRRHKNEPL…YSVGESDKET (157 aa). The residue at position 795 (S795) is a Phosphoserine.

The protein resides in the cell membrane. Functionally, cadherins are calcium-dependent cell adhesion proteins. They preferentially interact with themselves in a homophilic manner in connecting cells; cadherins may thus contribute to the sorting of heterogeneous cell types. This Rattus norvegicus (Rat) protein is Cadherin-8 (Cdh8).